Consider the following 365-residue polypeptide: NAD(P)H-quinone oxidoreductase subunit 1, chloroplastic (365 aa).

6 consecutive transmembrane segments (helical) span residues 29 to 49 (IWLLVPIFTLILVIIIGVLVI), 106 to 126 (IAVISTLLSYLVIPFGYHLVL), 129 to 149 (LSIGVFLWIAISSIAPIGLLM), 250 to 270 (YSGIKFGLFYVASYLNLLVSS), 302 to 322 (IFGMTIGILITLAKAYLFLFI), and 338 to 358 (LLNLGWKFLLPISLGNLLLTT).

Belongs to the complex I subunit 1 family. As to quaternary structure, NDH is composed of at least 16 different subunits, 5 of which are encoded in the nucleus.

The protein resides in the plastid. The protein localises to the chloroplast thylakoid membrane. It catalyses the reaction a plastoquinone + NADH + (n+1) H(+)(in) = a plastoquinol + NAD(+) + n H(+)(out). The enzyme catalyses a plastoquinone + NADPH + (n+1) H(+)(in) = a plastoquinol + NADP(+) + n H(+)(out). Its function is as follows. NDH shuttles electrons from NAD(P)H:plastoquinone, via FMN and iron-sulfur (Fe-S) centers, to quinones in the photosynthetic chain and possibly in a chloroplast respiratory chain. The immediate electron acceptor for the enzyme in this species is believed to be plastoquinone. Couples the redox reaction to proton translocation, and thus conserves the redox energy in a proton gradient. The protein is NAD(P)H-quinone oxidoreductase subunit 1, chloroplastic of Acorus calamus (Sweet flag).